The chain runs to 383 residues: Hydrogenase expression/formation protein HoxV (383 aa).

This Cupriavidus necator (strain ATCC 17699 / DSM 428 / KCTC 22496 / NCIMB 10442 / H16 / Stanier 337) (Ralstonia eutropha) protein is Hydrogenase expression/formation protein HoxV (hoxV).